Here is a 434-residue protein sequence, read N- to C-terminus: D-amino acid dehydrogenase (434 aa).

3-17 (VIVLGSGVIGTTTAY) is an FAD binding site.

This sequence belongs to the DadA oxidoreductase family. Requires FAD as cofactor.

The catalysed reaction is a D-alpha-amino acid + A + H2O = a 2-oxocarboxylate + AH2 + NH4(+). Functionally, oxidative deamination of D-amino acids. This chain is D-amino acid dehydrogenase, found in Bordetella parapertussis (strain 12822 / ATCC BAA-587 / NCTC 13253).